We begin with the raw amino-acid sequence, 343 residues long: L-threonine 3-dehydrogenase (343 aa).

Residue C38 coordinates Zn(2+). Active-site charge relay system residues include T40 and H43. 6 residues coordinate Zn(2+): H63, E64, C93, C96, C99, and C107. NAD(+)-binding positions include I175, D195, R200, 262–264, and 286–287; these read LGL and IY.

The protein belongs to the zinc-containing alcohol dehydrogenase family. In terms of assembly, homotetramer. Requires Zn(2+) as cofactor.

It localises to the cytoplasm. It carries out the reaction L-threonine + NAD(+) = (2S)-2-amino-3-oxobutanoate + NADH + H(+). It functions in the pathway amino-acid degradation; L-threonine degradation via oxydo-reductase pathway; glycine from L-threonine: step 1/2. In terms of biological role, catalyzes the NAD(+)-dependent oxidation of L-threonine to 2-amino-3-ketobutyrate. The sequence is that of L-threonine 3-dehydrogenase from Saccharopolyspora erythraea (strain ATCC 11635 / DSM 40517 / JCM 4748 / NBRC 13426 / NCIMB 8594 / NRRL 2338).